The sequence spans 756 residues: Polyribonucleotide nucleotidyltransferase (756 aa).

Residues Asp527 and Asp533 each coordinate Mg(2+). The KH domain maps to 593-652; sequence PRITTIKVPVDKIGEVIGPKGKMINSITEETGASISIEDDGTVFVGASNGEAAQAAIDKI. Residues 664–733 form the S1 motif domain; sequence GERFLGTVVK…NRGKISLVLV (70 aa).

This sequence belongs to the polyribonucleotide nucleotidyltransferase family. Requires Mg(2+) as cofactor.

The protein resides in the cytoplasm. The enzyme catalyses RNA(n+1) + phosphate = RNA(n) + a ribonucleoside 5'-diphosphate. Functionally, involved in mRNA degradation. Catalyzes the phosphorolysis of single-stranded polyribonucleotides processively in the 3'- to 5'-direction. This chain is Polyribonucleotide nucleotidyltransferase, found in Mycolicibacterium gilvum (strain PYR-GCK) (Mycobacterium gilvum (strain PYR-GCK)).